The following is a 655-amino-acid chain: NACHT, LRR and PYD domains-containing protein 10 (655 aa).

In terms of domain architecture, Pyrin spans 1 to 96; that stretch reads MAMAKARKPR…VDQLSHICLH (96 aa). One can recognise an NACHT domain in the interval 167-484; the sequence is SLVVLQGSAG…AMSYLVKEDQ (318 aa). 173–180 is a binding site for ATP; sequence GSAGTGKT. The segment covering 597–609 has biased composition (polar residues); it reads QSQNLFSVKSSLS. A disordered region spans residues 597-655; that stretch reads QSQNLFSVKSSLSHGPKEEQKCPSVHGQKEGKDNIAGTQKEASTGKGRGTEETPKNTYI. 2 stretches are compositionally biased toward basic and acidic residues: residues 611–629 and 644–655; these read GPKE…EGKD and RGTEETPKNTYI.

The protein belongs to the NLRP family. Oligomerizes. Interacts with PYCARD. Also interacts with CASP1 and IL1B. Interacts with NOD1 and components of the NOD1 signaling pathway including RIPK2, NR2C2/TAK1 and IKBKG/NEMO. Highly expressed in basal and suprabasal epidermal cell layers with lower levels in dermal fibroblast cells (at protein level). Widely expressed with highest levels in heart, brain and skeletal muscle. Also expressed in liver, colon, dermis and epidermis. Little expression detected in myeloid cells or peripheral blood mononuclear cells.

Its subcellular location is the cytoplasm. It localises to the cell membrane. Functionally, inhibits autoprocessing of CASP1, CASP1-dependent IL1B secretion, PYCARD aggregation and PYCARD-mediated apoptosis but not apoptosis induced by FAS or BID. Displays anti-inflammatory activity. Required for immunity against C.albicans infection. Involved in the innate immune response by contributing to pro-inflammatory cytokine release in response to invasive bacterial infection. Contributes to T-cell-mediated inflammatory responses in the skin. Plays a role in protection against periodontitis through its involvement in induction of IL1A via ERK activation in oral epithelial cells infected with periodontal pathogens. Exhibits both ATPase and GTPase activities. The sequence is that of NACHT, LRR and PYD domains-containing protein 10 (NLRP10) from Homo sapiens (Human).